We begin with the raw amino-acid sequence, 96 residues long: Prokineticin Bv8 (96 aa).

Residues 1-19 (MKCFAQIVVLLLVIAFSHG) form the signal peptide. The interval 20 to 24 (AVITG) is may be important for binding to prokineticin receptor 2. Disulfide bonds link C26–C38, C32–C50, C37–C78, C60–C86, and C80–C95.

As to expression, expressed by the skin glands.

The protein localises to the secreted. In terms of biological role, potent agonist for both PKR1/PROKR1 and PKR2/PROKR2, and inducer of a potent and long-lasting hyperalgesia. Shows an EC(50) of 0.264 nM, when tested on neuroblastoma cells (SH-SY5Y) which endogenously express mainly PKR2/PROKR2. Also potentiates capsaicin-induced TRPV1 current, when tested on DRG neurons. Induces a biphasic hyperalgesia to tactile and thermal stimuli after systemic injection of this protein into rat. The initial phase of hyperalgesia is caused by a local action on nociceptors, because intraplantar injection of this protein causes a strong and localized hyperalgesia with a similar time course to that of the initial phase of hyperalgesia seen with systemic injection. The secondary phase of hyperalgesia is not seen with local intraplantar injection and is therefore probably attributable to a central action of this protein. At subnanomolar concentrations, this protein both induces potent chemotaxis of macrophages and stimulates LPS-induced production of the pro-inflammatory cytokines IL-1 and IL-12. In vivo, this protein potently stimulates the contraction of the guinea-pig gastrointestinal (GI) smooth muscle (at nanomolar concentration). The chain is Prokineticin Bv8 from Bombina variegata (Yellow-bellied toad).